Here is a 429-residue protein sequence, read N- to C-terminus: TNF receptor-associated factor family protein DDB_G0267744 (429 aa).

Residues 22–60 form an RING-type; degenerate zinc finger; the sequence is CVICSHLQVDIYQCVEGHFACKNCFLKMIELKKQCMTCR. TRAF-type zinc fingers lie at residues 151 to 203 and 204 to 265; these read HHLK…GEFN and NHQD…SNSE.

This sequence belongs to the TNF receptor-associated factor family.

It is found in the cytoplasm. Probable adapter protein and signal transducer that links members of the tumor necrosis factor receptor family to different signaling pathways by association with the receptor cytoplasmic domain and kinases. This chain is TNF receptor-associated factor family protein DDB_G0267744, found in Dictyostelium discoideum (Social amoeba).